The sequence spans 339 residues: Deubiquitinase and deneddylase Dub2 (339 aa).

The chain crosses the membrane as a helical span at residues 36–56 (IIIALFLIVISCGLILCAYTF). Residues His203, Asp220, and Cys282 contribute to the active site.

This sequence belongs to the peptidase C48 family.

It is found in the secreted. The protein localises to the host cell. The protein resides in the membrane. Effector proteins function to alter host cell physiology and promote bacterial survival in host tissues. This protease possesses deubiquitinating and deneddylating activities. In Chlamydia trachomatis serovar L2 (strain ATCC VR-902B / DSM 19102 / 434/Bu), this protein is Deubiquitinase and deneddylase Dub2 (cdu2).